A 585-amino-acid chain; its full sequence is MYRTRTCGDLRLADEGLVVTLAGWVQKTRKMGGMTFVDIRDRYGITQLVFNQEVDAALCEKANKLGREFVIQVTGTVRERSSKNAHIPTGDIELIVSELNVLNTALTPPFTIEEETDGGDDLRMKYRYLDLRRACVRKNLELRHRMAFEVRRYLDEQGFLEVETPVLVNSTPEGARDFVVPSRMNPGQFYALPQSPQTLKQLLMVSGFDRYFQIVKCFRDEDLRADRQPEFTQIDCEMSFVEQEDVLNMFEGMAKHLFKVIRGVEFKESFMRMTWQDAMKQYGSDKPDLRFGMKFVELMDIMKGHGFSVFDNAAYIGGICAEGAASYTRKQLDALTEFVKRPQVGAKGLVYARVEADGNVKSSVDKFYSQEVLQEMKNAFGAKPGDLILILSGDDAMKTRKQLCELRLEMGNQLGLRDKDKFVCLWVIDFPLFEWNEDDQRFYAMHHPFTSPNPDDIPLLDTDPGAVRANAYDMVINGVEVGGGSIRIHDSQLQDKMFKLLGFTEERAQEQFGFLMNAFKYGAPPHGGLAYGLDRFVSLFAGLDSIRDCIAFPKNNSGRDVMLDAPGVLDPAQLDELNLIVDIKK.

Glu173 contacts L-aspartate. The tract at residues Gln197 to Lys200 is aspartate. Arg219 contacts L-aspartate. ATP-binding positions include Arg219–Glu221 and Gln228. His446 contacts L-aspartate. Glu480 serves as a coordination point for ATP. Residue Arg487 coordinates L-aspartate. Gly532–Arg535 contacts ATP.

Belongs to the class-II aminoacyl-tRNA synthetase family. Type 1 subfamily. Homodimer.

It is found in the cytoplasm. It catalyses the reaction tRNA(Asp) + L-aspartate + ATP = L-aspartyl-tRNA(Asp) + AMP + diphosphate. Its function is as follows. Catalyzes the attachment of L-aspartate to tRNA(Asp) in a two-step reaction: L-aspartate is first activated by ATP to form Asp-AMP and then transferred to the acceptor end of tRNA(Asp). The polypeptide is Aspartate--tRNA ligase (Parabacteroides distasonis (strain ATCC 8503 / DSM 20701 / CIP 104284 / JCM 5825 / NCTC 11152)).